A 283-amino-acid polypeptide reads, in one-letter code: Plasma membrane ascorbate-dependent reductase CYBRD1 (283 aa).

The Cytoplasmic segment spans residues 1-5; that stretch reads MEGYK. Residues 6–30 traverse the membrane as a helical segment; it reads SFLVFLVSSLLLGFLGVIFTLVWVL. Positions 13-218 constitute a Cytochrome b561 domain; that stretch reads SSLLLGFLGV…FGGLVVWMVT (206 aa). Topologically, residues 31–45 are extracellular; sequence HWREGLGWDGGAAEF. A helical transmembrane segment spans residues 46-67; the sequence is NWHPVLVTSGFIFIQGIAIIVY. His-48, Arg-68, and Lys-77 together coordinate heme b. Residues 68–76 lie on the Cytoplasmic side of the membrane; it reads RLPWTWNCS. Residues Lys-77 and Lys-81 each contribute to the L-ascorbate site. A helical membrane pass occupies residues 77–103; that stretch reads KLLMKFIHAGLHLTAFVFTIVALVAVF. Residue His-84 coordinates heme b. Residues 104 to 116 lie on the Extracellular side of the membrane; it reads DFHNAKNIPNMYS. Residue His-106 coordinates Fe(3+). Heme b contacts are provided by residues 113–116 and His-118; that span reads NMYS. The chain crosses the membrane as a helical span at residues 117–142; the sequence is LHSWIGLTVVILYALQLVLGVSIYLL. Residues 143 to 149 lie on the Cytoplasmic side of the membrane; the sequence is PFARDTL. L-ascorbate is bound at residue Arg-150. Residues 150–177 form a helical membrane-spanning segment; sequence RAALMPVHVYSGLLIFGTVIATALMGIT. Heme b-binding residues include His-157 and Glu-178. Topologically, residues 178–195 are extracellular; the sequence is EKLIFSLKEPPYSKMPPE. A helical transmembrane segment spans residues 196 to 220; that stretch reads AIFVNTFGLIILVFGGLVVWMVTTP. The Cytoplasmic portion of the chain corresponds to 221–283; the sequence is AWKRPREQEI…LDDAGQRSTM (63 aa). Residue Lys-223 participates in heme b binding. A disordered region spans residues 234 to 263; the sequence is NPTVSSPDGTEEGSTITDCSNTEKSDVELN. Residues 235-253 are compositionally biased toward polar residues; the sequence is PTVSSPDGTEEGSTITDCS. Residues 254 to 263 are compositionally biased toward basic and acidic residues; that stretch reads NTEKSDVELN.

Homodimer. It depends on heme b as a cofactor.

The protein resides in the cell membrane. It localises to the apical cell membrane. The enzyme catalyses Fe(3+)(out) + L-ascorbate(in) = monodehydro-L-ascorbate radical(in) + Fe(2+)(out) + H(+). It carries out the reaction Cu(2+)(out) + L-ascorbate(in) = Cu(+)(out) + monodehydro-L-ascorbate radical(in) + H(+). It catalyses the reaction monodehydro-L-ascorbate radical(out) + L-ascorbate(in) = monodehydro-L-ascorbate radical(in) + L-ascorbate(out). Plasma membrane reductase that uses cytoplasmic ascorbate as an electron donor to reduce extracellular Fe(3+) into Fe(2+). It is also able to reduce extracellular monodehydro-L-ascorbate and may be involved in extracellular ascorbate regeneration. May also function as a cupric transmembrane reductase. The polypeptide is Plasma membrane ascorbate-dependent reductase CYBRD1 (cybrd1) (Xenopus tropicalis (Western clawed frog)).